A 230-amino-acid polypeptide reads, in one-letter code: 2,3-bisphosphoglycerate-dependent phosphoglycerate mutase 2 (230 aa).

Residues 8-15, 21-22, R60, 87-90, K98, 114-115, and 183-184 each bind substrate; these read RHGQSEWN, TG, ERHY, RR, and GN. Catalysis depends on H9, which acts as the Tele-phosphohistidine intermediate. E87 acts as the Proton donor/acceptor in catalysis.

The protein belongs to the phosphoglycerate mutase family. BPG-dependent PGAM subfamily.

It carries out the reaction (2R)-2-phosphoglycerate = (2R)-3-phosphoglycerate. The protein operates within carbohydrate degradation; glycolysis; pyruvate from D-glyceraldehyde 3-phosphate: step 3/5. Functionally, catalyzes the interconversion of 2-phosphoglycerate and 3-phosphoglycerate. This is 2,3-bisphosphoglycerate-dependent phosphoglycerate mutase 2 from Lactiplantibacillus plantarum (strain ATCC BAA-793 / NCIMB 8826 / WCFS1) (Lactobacillus plantarum).